The chain runs to 198 residues: Probable thymidylate kinase (198 aa).

9–16 (GIDGSGKT) contributes to the ATP binding site.

The protein belongs to the thymidylate kinase family.

It carries out the reaction dTMP + ATP = dTDP + ADP. This chain is Probable thymidylate kinase, found in Methanococcus vannielii (strain ATCC 35089 / DSM 1224 / JCM 13029 / OCM 148 / SB).